The chain runs to 166 residues: Interferon gamma (166 aa).

The signal sequence occupies residues 1 to 23 (MNYTSFILAFQLCAILGSSTYYC). A Pyrrolidone carboxylic acid modification is found at glutamine 24. 2 N-linked (GlcNAc...) asparagine glycosylation sites follow: asparagine 39 and asparagine 106. The tract at residues 147–166 (ANLRKRKRSQNPFRGRRALQ) is disordered. The span at 148-166 (NLRKRKRSQNPFRGRRALQ) shows a compositional bias: basic residues.

It belongs to the type II (or gamma) interferon family. Homodimer. Interacts with IFNGR1 (via extracellular domain); this interaction promotes IFNGR1 dimerization. Released primarily from activated T lymphocytes.

It localises to the secreted. Its function is as follows. Type II interferon produced by immune cells such as T-cells and NK cells that plays crucial roles in antimicrobial, antiviral, and antitumor responses by activating effector immune cells and enhancing antigen presentation. Primarily signals through the JAK-STAT pathway after interaction with its receptor IFNGR1 to affect gene regulation. Upon IFNG binding, IFNGR1 intracellular domain opens out to allow association of downstream signaling components JAK2, JAK1 and STAT1, leading to STAT1 activation, nuclear translocation and transcription of IFNG-regulated genes. Many of the induced genes are transcription factors such as IRF1 that are able to further drive regulation of a next wave of transcription. Plays a role in class I antigen presentation pathway by inducing a replacement of catalytic proteasome subunits with immunoproteasome subunits. In turn, increases the quantity, quality, and repertoire of peptides for class I MHC loading. Increases the efficiency of peptide generation also by inducing the expression of activator PA28 that associates with the proteasome and alters its proteolytic cleavage preference. Up-regulates as well MHC II complexes on the cell surface by promoting expression of several key molecules such as cathepsins B/CTSB, H/CTSH, and L/CTSL. Participates in the regulation of hematopoietic stem cells during development and under homeostatic conditions by affecting their development, quiescence, and differentiation. In Equus asinus (Donkey), this protein is Interferon gamma (IFNG).